Consider the following 195-residue polypeptide: dCTP deaminase (195 aa).

DCTP contacts are provided by residues 105–110, Asp123, 131–133, Gln152, Tyr166, Lys173, and Gln177; these read RSSLGR and TLE. Glu133 acts as the Proton donor/acceptor in catalysis. The segment at 159–195 is disordered; that stretch reads KSPAERPYGAERGSKYQGQTGPQASRIQGDREFGGDQ. Positions 160–172 are enriched in basic and acidic residues; the sequence is SPAERPYGAERGS. Residues 174–184 are compositionally biased toward polar residues; sequence YQGQTGPQASR. Positions 186–195 are enriched in basic and acidic residues; sequence QGDREFGGDQ.

The protein belongs to the dCTP deaminase family. As to quaternary structure, homotrimer.

The enzyme catalyses dCTP + H2O + H(+) = dUTP + NH4(+). It participates in pyrimidine metabolism; dUMP biosynthesis; dUMP from dCTP (dUTP route): step 1/2. Catalyzes the deamination of dCTP to dUTP. The chain is dCTP deaminase from Natronomonas pharaonis (strain ATCC 35678 / DSM 2160 / CIP 103997 / JCM 8858 / NBRC 14720 / NCIMB 2260 / Gabara) (Halobacterium pharaonis).